The chain runs to 195 residues: Large ribosomal subunit protein bL9 (195 aa).

This sequence belongs to the bacterial ribosomal protein bL9 family.

Binds to the 23S rRNA. This is Large ribosomal subunit protein bL9 from Rhodopseudomonas palustris (strain TIE-1).